The primary structure comprises 585 residues: Glycerol-3-phosphate dehydrogenase 2 (585 aa).

37 to 65 (DVVVIGGGVVGSGCALDAATRGLKVALVE) is a binding site for FAD.

This sequence belongs to the FAD-dependent glycerol-3-phosphate dehydrogenase family. FAD serves as cofactor.

It localises to the cytoplasm. It carries out the reaction a quinone + sn-glycerol 3-phosphate = dihydroxyacetone phosphate + a quinol. This is Glycerol-3-phosphate dehydrogenase 2 (glpD2) from Mycobacterium bovis (strain ATCC BAA-935 / AF2122/97).